The sequence spans 238 residues: Trypsin-3 (238 aa).

Residues 1–7 (FAVAFAA) form the signal peptide. A propeptide spans 8 to 15 (PIDDEDDK) (activation peptide). Residues 16–236 (IVGGYECRKN…YRSWISSTMS (221 aa)) form the Peptidase S1 domain. Intrachain disulfides connect C22/C152, C40/C56, C124/C225, C131/C198, C163/C177, and C188/C212. H55 functions as the Charge relay system in the catalytic mechanism. Ca(2+) is bound by residues E67, N69, V72, and E77. D99 functions as the Charge relay system in the catalytic mechanism. Catalysis depends on S192, which acts as the Charge relay system.

Belongs to the peptidase S1 family. Requires Ca(2+) as cofactor.

The protein resides in the secreted. Its subcellular location is the extracellular space. It catalyses the reaction Preferential cleavage: Arg-|-Xaa, Lys-|-Xaa.. In Salmo salar (Atlantic salmon), this protein is Trypsin-3.